Here is a 142-residue protein sequence, read N- to C-terminus: Conidial pigment biosynthesis dehydratase EthD (142 aa).

Positions 25–121 constitute an EthD domain; it reads PGMSEAAYRE…PDHQKFADTS (97 aa).

This sequence belongs to the tpcK family.

It functions in the pathway pigment biosynthesis. Its function is as follows. Dehydratase; part of the Pks1 gene cluster that mediates the biosynthesis of an anthraquinone derivative pigment that contributes to conidial pigmentation that provides protection from UV radiation, heat and cold stress. The polyketide synthase Pks1 produces 1-acetyl-2,4,6,8-tetrahydroxy-9,10-anthraquinone though condensation of acetyl-CoA with malonyl-CoA. The dehydratase EthD and the laccase Mlac1 further convert the anthraquinone derivative into the final conidial pigment. The protein is Conidial pigment biosynthesis dehydratase EthD of Metarhizium robertsii (strain ARSEF 23 / ATCC MYA-3075) (Metarhizium anisopliae (strain ARSEF 23)).